Here is a 311-residue protein sequence, read N- to C-terminus: tRNA dimethylallyltransferase (311 aa).

10 to 17 serves as a coordination point for ATP; it reads GPTASGKT. 12–17 contacts substrate; sequence TASGKT. Interaction with substrate tRNA regions lie at residues 35 to 38, 159 to 163, and 240 to 245; these read DSAL, QRINR, and RCVGYR.

The protein belongs to the IPP transferase family. Monomer. It depends on Mg(2+) as a cofactor.

It carries out the reaction adenosine(37) in tRNA + dimethylallyl diphosphate = N(6)-dimethylallyladenosine(37) in tRNA + diphosphate. Its function is as follows. Catalyzes the transfer of a dimethylallyl group onto the adenine at position 37 in tRNAs that read codons beginning with uridine, leading to the formation of N6-(dimethylallyl)adenosine (i(6)A). The chain is tRNA dimethylallyltransferase from Haemophilus influenzae (strain 86-028NP).